Consider the following 360-residue polypeptide: E3 ubiquitin-protein ligase RNF146 (360 aa).

The RING-type zinc finger occupies 37–75; it reads CAICLQTCVHPVSLPCKHVFCYLCVKGASWLGKRCALCR. Residues Lys85 and Lys95 each participate in a glycyl lysine isopeptide (Lys-Gly) (interchain with G-Cter in ubiquitin) cross-link. The WWE domain maps to 92–168; the sequence is EELKAASRGN…EHGRRRKIKR (77 aa). Tyr108, Arg111, and Trp115 together coordinate a glycoprotein. Lys131 participates in a covalent cross-link: Glycyl lysine isopeptide (Lys-Gly) (interchain with G-Cter in ubiquitin). Residues Tyr145, Gln154, Arg164, and Lys176 each contribute to the a glycoprotein site. A Glycyl lysine isopeptide (Lys-Gly) (interchain with G-Cter in ubiquitin) cross-link involves residue Lys176. The segment at 259-360 is disordered; the sequence is ERSHRGEGEE…PDGQCTVTEV (102 aa). The segment covering 284–294 has biased composition (acidic residues); the sequence is SIEETESDASS. Phosphoserine occurs at positions 290 and 294. Over residues 295–305 the composition is skewed to low complexity; sequence DSENVSSAVVA. The segment covering 307-333 has biased composition (polar residues); sequence HSLTQQRLLVSNANQTVSDRSDQSGTD.

As to quaternary structure, can form homooligomers. Interacts with PARsylated AXIN1, AXIN2, BLZF1, CASC3, H1-2, IPO7, LIG3, NCL, PARP1, XRCC1, XRCC5 and XRCC6. Interacts with DDB1, DHX15, IQGAP1, LRPPRC, PARP2, PRKDC, RUVBL2, TNKS1 and TNKS2. Binding often leads to interactor ubiquitination, in the presence of the appropriate E1 and E2 enzymes, and proteasomal degradation. Post-translationally, ubiquitinated; autoubiquitinated. Autoubiquitination is enhanced upon poly(ADP-ribose)-binding.

It is found in the cytoplasm. The protein localises to the cytosol. It localises to the nucleus. The catalysed reaction is S-ubiquitinyl-[E2 ubiquitin-conjugating enzyme]-L-cysteine + [acceptor protein]-L-lysine = [E2 ubiquitin-conjugating enzyme]-L-cysteine + N(6)-ubiquitinyl-[acceptor protein]-L-lysine.. It participates in protein modification; protein ubiquitination. E3 ubiquitin-protein ligase that specifically binds poly-ADP-ribosylated (PARsylated) proteins and mediates their ubiquitination and subsequent degradation. May regulate many important biological processes, such as cell survival and DNA damage response. Acts as an activator of the Wnt signaling pathway by mediating the ubiquitination of PARsylated AXIN1 and AXIN2, 2 key components of the beta-catenin destruction complex. Acts in cooperation with tankyrase proteins (TNKS and TNKS2), which mediate PARsylation of target proteins AXIN1, AXIN2, BLZF1, CASC3, TNKS and TNKS2. Recognizes and binds tankyrase-dependent PARsylated proteins via its WWE domain and mediates their ubiquitination, leading to their degradation. Different ubiquitin linkage types have been observed: TNKS2 undergoes ubiquitination at 'Lys-48' and 'Lys-63', while AXIN1 is only ubiquitinated at 'Lys-48'. May regulate TNKS and TNKS2 subcellular location, preventing aggregation at a centrosomal location. Neuroprotective protein. Protects the brain against N-methyl-D-aspartate (NMDA) receptor-mediated glutamate excitotoxicity and ischemia, by interfering with PAR-induced cell death, called parthanatos. Prevents nuclear translocation of AIFM1 in a PAR-binding dependent manner. Does not affect PARP1 activation. Protects against cell death induced by DNA damaging agents, such as N-methyl-N-nitro-N-nitrosoguanidine (MNNG) and rescues cells from G1 arrest. Promotes cell survival after gamma-irradiation. Facilitates DNA repair. In Macaca fascicularis (Crab-eating macaque), this protein is E3 ubiquitin-protein ligase RNF146 (RNF146).